The primary structure comprises 953 residues: Atromentin synthetase invA2 (953 aa).

The tract at residues 38-460 is adenylation (A) domain; it reads RAVSQYPNHE…SGRIKDTVIV (423 aa). The Carrier domain maps to 592-670; it reads APSTETEKTL…SLAKYVDSLI (79 aa). Residues 597-667 are thiolation and peptide carrier (T) domain; that stretch reads TEKTLAGIYA…VISSLAKYVD (71 aa). At Ser-629 the chain carries O-(pantetheine 4'-phosphoryl)serine. The segment at 693–795 is thioesterase (TE) domain; the sequence is PIFMVHPGVG…FTGLINIPPH (103 aa).

This sequence belongs to the ATP-dependent AMP-binding enzyme family.

The protein operates within secondary metabolite biosynthesis. Its function is as follows. An L-tyrosine:2-oxoglutarate aminotransferase (probably invD) and atromentin synthetase invA2 catalyze consecutive steps to turn over L-tyrosine into atromentin, which represents the generic precursor molecule for the entire terphenylquinone and pulvinic acid family of pigments, which are widely distributed secondary metabolites in homobasidiomycetes. The first step catalyzed by the aminotransferase converts L-tyrosine in to 4-hydroxyphenylpyruvate (4-HPP). Adenylation of two 4-HPP monomers by the invA2 adenylation (A) domain, covalent tethering of the monomers as a thioester and oxoester onto the invA2 thiolation (T) and thioesterase (TE) domains, respectively, and symmetric C-C-bond formation between two monomers catalyzed by the invA2 TE domain leads to atromentin. The protein is Atromentin synthetase invA2 (invA2) of Paxillus involutus (Naked brimcap).